Reading from the N-terminus, the 380-residue chain is 5-amino-6-(D-ribitylamino)uracil--L-tyrosine 4-hydroxyphenyl transferase (380 aa).

Positions 56-303 (VTYIINRNIN…GAVARIYLGN (248 aa)) constitute a Radical SAM core domain. Cys-70, Cys-74, and Cys-77 together coordinate [4Fe-4S] cluster.

It belongs to the radical SAM superfamily. CofH family. Consists of two subunits, CofG and CofH. The cofactor is [4Fe-4S] cluster.

The catalysed reaction is 5-amino-6-(D-ribitylamino)uracil + L-tyrosine + S-adenosyl-L-methionine = 5-amino-5-(4-hydroxybenzyl)-6-(D-ribitylimino)-5,6-dihydrouracil + 2-iminoacetate + 5'-deoxyadenosine + L-methionine + H(+). The protein operates within cofactor biosynthesis; coenzyme F0 biosynthesis. In terms of biological role, catalyzes the radical-mediated synthesis of 5-amino-5-(4-hydroxybenzyl)-6-(D-ribitylimino)-5,6-dihydrouracil from 5-amino-6-(D-ribitylamino)uracil and L-tyrosine. The chain is 5-amino-6-(D-ribitylamino)uracil--L-tyrosine 4-hydroxyphenyl transferase from Nostoc punctiforme (strain ATCC 29133 / PCC 73102).